The following is a 394-amino-acid chain: Elongation factor Tu (394 aa).

One can recognise a tr-type G domain in the interval 10–204 (KPHVNVGTIG…AMDDYIPAPE (195 aa)). Positions 19-26 (GHVDHGKT) are G1. 19-26 (GHVDHGKT) lines the GTP pocket. A Mg(2+)-binding site is contributed by T26. The G2 stretch occupies residues 60 to 64 (GITIN). Residues 81–84 (DCPG) are G3. GTP-binding positions include 81-85 (DCPGH) and 136-139 (NKCD). Positions 136–139 (NKCD) are G4. The segment at 174 to 176 (SAL) is G5.

This sequence belongs to the TRAFAC class translation factor GTPase superfamily. Classic translation factor GTPase family. EF-Tu/EF-1A subfamily. As to quaternary structure, monomer.

The protein resides in the cytoplasm. The catalysed reaction is GTP + H2O = GDP + phosphate + H(+). Functionally, GTP hydrolase that promotes the GTP-dependent binding of aminoacyl-tRNA to the A-site of ribosomes during protein biosynthesis. The chain is Elongation factor Tu from Francisella tularensis subsp. holarctica (strain FTNF002-00 / FTA).